The chain runs to 190 residues: Probable oligoribonuclease (190 aa).

The region spanning 19-181 (MVWVDLEMTG…QDIEESIEEL (163 aa)) is the Exonuclease domain. Residue Tyr140 is part of the active site.

It belongs to the oligoribonuclease family.

Its function is as follows. 3'-to-5' exoribonuclease specific for small oligoribonucleotides. This chain is Probable oligoribonuclease (rexo2-1), found in Dictyostelium discoideum (Social amoeba).